Consider the following 837-residue polypeptide: Protein kintoun (837 aa).

Disordered stretches follow at residues 100-119 (APSS…GSHW), 205-224 (LPGV…LPDF), 230-249 (YPAA…LQPA), and 363-515 (AAAP…GPGT). Positions 233-242 (APGPRAPSPP) are enriched in pro residues. Residues 428-442 (GEERVPKPGEQDLSR) are compositionally biased toward basic and acidic residues. Positions 445 to 459 (GSPPGSVEEPSPGGE) are enriched in low complexity. Phosphoserine occurs at positions 461 and 467. Positions 484–498 (ESARGDSSVETREES) are enriched in basic and acidic residues. Phosphoserine occurs at positions 640, 641, and 773.

It belongs to the PIH1 family. Kintoun subfamily. As to quaternary structure, interacts with CFAP300. Interacts with DNAAF4. Interacts with DNAAF6/PIH1D3. Interacts with DNAI2 and HSPA1A.

Its subcellular location is the cytoplasm. The protein resides in the dynein axonemal particle. Its function is as follows. Required for cytoplasmic pre-assembly of axonemal dyneins, thereby playing a central role in motility in cilia and flagella. Involved in pre-assembly of dynein arm complexes in the cytoplasm before intraflagellar transport loads them for the ciliary compartment. This is Protein kintoun from Homo sapiens (Human).